The primary structure comprises 278 residues: Shikimate dehydrogenase (NADP(+)) (278 aa).

Residues serine 19–serine 21 and threonine 66 each bind shikimate. The Proton acceptor role is filled by lysine 70. Aspartate 82 contributes to the NADP(+) binding site. 2 residues coordinate shikimate: asparagine 91 and aspartate 107. Residues glycine 133–alanine 137, asparagine 157–lysine 162, and isoleucine 222 contribute to the NADP(+) site. Tyrosine 224 is a shikimate binding site. Glycine 245 is an NADP(+) binding site.

Belongs to the shikimate dehydrogenase family. As to quaternary structure, homodimer.

The enzyme catalyses shikimate + NADP(+) = 3-dehydroshikimate + NADPH + H(+). It participates in metabolic intermediate biosynthesis; chorismate biosynthesis; chorismate from D-erythrose 4-phosphate and phosphoenolpyruvate: step 4/7. Functionally, involved in the biosynthesis of the chorismate, which leads to the biosynthesis of aromatic amino acids. Catalyzes the reversible NADPH linked reduction of 3-dehydroshikimate (DHSA) to yield shikimate (SA). This chain is Shikimate dehydrogenase (NADP(+)), found in Dinoroseobacter shibae (strain DSM 16493 / NCIMB 14021 / DFL 12).